The following is a 91-amino-acid chain: Small ribosomal subunit protein bS18 (91 aa).

This sequence belongs to the bacterial ribosomal protein bS18 family. As to quaternary structure, part of the 30S ribosomal subunit. Forms a tight heterodimer with protein bS6.

Its function is as follows. Binds as a heterodimer with protein bS6 to the central domain of the 16S rRNA, where it helps stabilize the platform of the 30S subunit. This is Small ribosomal subunit protein bS18 from Syntrophotalea carbinolica (strain DSM 2380 / NBRC 103641 / GraBd1) (Pelobacter carbinolicus).